Reading from the N-terminus, the 483-residue chain is Regulatory protein ViaA (483 aa).

The protein belongs to the ViaA family. In terms of assembly, homodimer. Interacts with RavA.

The protein resides in the cytoplasm. In terms of biological role, component of the RavA-ViaA chaperone complex, which may act on the membrane to optimize the function of some of the respiratory chains. ViaA stimulates the ATPase activity of RavA. The sequence is that of Regulatory protein ViaA from Shigella flexneri.